The chain runs to 307 residues: Elongation factor Ts (307 aa).

The tract at residues 79–82 (TDFV) is involved in Mg(2+) ion dislocation from EF-Tu.

Belongs to the EF-Ts family.

The protein localises to the cytoplasm. Functionally, associates with the EF-Tu.GDP complex and induces the exchange of GDP to GTP. It remains bound to the aminoacyl-tRNA.EF-Tu.GTP complex up to the GTP hydrolysis stage on the ribosome. The chain is Elongation factor Ts from Bartonella tribocorum (strain CIP 105476 / IBS 506).